The sequence spans 157 residues: MRVGLGYDVHKLVENRKLILGGVEIPYEKGLLGHSDADVLLHAIMDSLLGACALGDIGRHFPDTDNKFKGISSIKLLEEVNKLIIKNRYIINNIDSVIIAQKPKLAPYIDTMTENISNALNIKIDQINIKATTEEGLGFTGGMLGISSQSICSVIKK.

Asp8 and His10 together coordinate a divalent metal cation. Residues 8–10 (DVH) and 34–35 (HS) each bind 4-CDP-2-C-methyl-D-erythritol 2-phosphate. An a divalent metal cation-binding site is contributed by His42. 4-CDP-2-C-methyl-D-erythritol 2-phosphate is bound by residues 56-58 (DIG), 61-65 (FPDTD), 132-135 (TTEE), and Phe139.

This sequence belongs to the IspF family. In terms of assembly, homotrimer. A divalent metal cation serves as cofactor.

It catalyses the reaction 4-CDP-2-C-methyl-D-erythritol 2-phosphate = 2-C-methyl-D-erythritol 2,4-cyclic diphosphate + CMP. Its pathway is isoprenoid biosynthesis; isopentenyl diphosphate biosynthesis via DXP pathway; isopentenyl diphosphate from 1-deoxy-D-xylulose 5-phosphate: step 4/6. Involved in the biosynthesis of isopentenyl diphosphate (IPP) and dimethylallyl diphosphate (DMAPP), two major building blocks of isoprenoid compounds. Catalyzes the conversion of 4-diphosphocytidyl-2-C-methyl-D-erythritol 2-phosphate (CDP-ME2P) to 2-C-methyl-D-erythritol 2,4-cyclodiphosphate (ME-CPP) with a corresponding release of cytidine 5-monophosphate (CMP). In Clostridium botulinum (strain Eklund 17B / Type B), this protein is 2-C-methyl-D-erythritol 2,4-cyclodiphosphate synthase.